A 146-amino-acid polypeptide reads, in one-letter code: MQIQTIRQYLPHRYPFLLVDRVTEVTDNSIVGYKNVSINEEFLQGHFPEYPIMPGVLIVEALAQVSGVLGFIMNNETPKPGSLFLFAGAERVRFKKQVVAGDQLVLKSELVMQKRGIYKYNCTASVDGIVAATAEIMISHQKTEQA.

The active site involves His46.

It belongs to the thioester dehydratase family. FabZ subfamily.

It is found in the cytoplasm. The enzyme catalyses a (3R)-hydroxyacyl-[ACP] = a (2E)-enoyl-[ACP] + H2O. Its function is as follows. Involved in unsaturated fatty acids biosynthesis. Catalyzes the dehydration of short chain beta-hydroxyacyl-ACPs and long chain saturated and unsaturated beta-hydroxyacyl-ACPs. The polypeptide is 3-hydroxyacyl-[acyl-carrier-protein] dehydratase FabZ (Acinetobacter baumannii (strain ATCC 17978 / DSM 105126 / CIP 53.77 / LMG 1025 / NCDC KC755 / 5377)).